Consider the following 691-residue polypeptide: Elongation factor G (691 aa).

Residues 8–282 form the tr-type G domain; the sequence is ERVRNIGIAA…AVVDYLPAPI (275 aa). GTP is bound by residues 17 to 24, 81 to 85, and 135 to 138; these read AHIDAGKT, DTPGH, and NKMD.

The protein belongs to the TRAFAC class translation factor GTPase superfamily. Classic translation factor GTPase family. EF-G/EF-2 subfamily.

It localises to the cytoplasm. Catalyzes the GTP-dependent ribosomal translocation step during translation elongation. During this step, the ribosome changes from the pre-translocational (PRE) to the post-translocational (POST) state as the newly formed A-site-bound peptidyl-tRNA and P-site-bound deacylated tRNA move to the P and E sites, respectively. Catalyzes the coordinated movement of the two tRNA molecules, the mRNA and conformational changes in the ribosome. The chain is Elongation factor G from Prochlorococcus marinus subsp. pastoris (strain CCMP1986 / NIES-2087 / MED4).